The chain runs to 658 residues: Glycogen debranching enzyme (658 aa).

Asp336 acts as the Nucleophile in catalysis. The Proton donor role is filled by Glu371. Residues 459-484 (EANGEENRDGTNSNYSDNHGKEGLGG) are disordered.

The protein belongs to the glycosyl hydrolase 13 family.

It catalyses the reaction Hydrolysis of (1-&gt;6)-alpha-D-glucosidic linkages to branches with degrees of polymerization of three or four glucose residues in limit dextrin.. Its pathway is glycan degradation; glycogen degradation. Its function is as follows. Removes maltotriose and maltotetraose chains that are attached by 1,6-alpha-linkage to the limit dextrin main chain, generating a debranched limit dextrin. In Salmonella enteritidis PT4 (strain P125109), this protein is Glycogen debranching enzyme.